A 339-amino-acid polypeptide reads, in one-letter code: Ornithine carbamoyltransferase, catabolic (339 aa).

Carbamoyl phosphate-binding positions include 57 to 60 (STRT), Gln-84, Arg-108, and 135 to 138 (HPTQ). Residues Asn-167, Asp-231, and 235 to 236 (SM) each bind L-ornithine. Residues 274–275 (CL) and Arg-319 contribute to the carbamoyl phosphate site.

This sequence belongs to the aspartate/ornithine carbamoyltransferase superfamily. OTCase family.

It is found in the cytoplasm. The catalysed reaction is carbamoyl phosphate + L-ornithine = L-citrulline + phosphate + H(+). Its pathway is amino-acid degradation; L-arginine degradation via ADI pathway; carbamoyl phosphate from L-arginine: step 2/2. Reversibly catalyzes the transfer of the carbamoyl group from carbamoyl phosphate (CP) to the N(epsilon) atom of ornithine (ORN) to produce L-citrulline. The chain is Ornithine carbamoyltransferase, catabolic (arcB) from Enterococcus faecalis (strain ATCC 700802 / V583).